The sequence spans 185 residues: Large ribosomal subunit protein uL6m (185 aa).

It belongs to the universal ribosomal protein uL6 family.

It is found in the mitochondrion. This Reclinomonas americana protein is Large ribosomal subunit protein uL6m (RPL6).